A 281-amino-acid polypeptide reads, in one-letter code: Protein-S-isoprenylcysteine O-methyltransferase (281 aa).

Residues 1–2 (ML) lie on the Cytoplasmic side of the membrane. Residues 3-29 (SPAGKISLQSFTGSSLVFFVICMFNHY) traverse the membrane as a helical segment. Over 30–35 (YGITNL) the chain is Lumenal. Residues 36-53 (VVNTLIVFFYAVNVYFFL) form a helical membrane-spanning segment. Residues 54 to 58 (KFFYN) are Cytoplasmic-facing. A helical transmembrane segment spans residues 59-85 (EFAFAIAIRAAFLGLVLVLGLYIKLVA). Residues 86-88 (PPN) lie on the Lumenal side of the membrane. The chain crosses the membrane as a helical span at residues 89–113 (IQIFGGYMSVMALFHYSEFLAIAIV). At 114–118 (QPKQV) the chain is on the cytoplasmic side. A helical membrane pass occupies residues 119–149 (STDSFVINHSPQYTIAAVSSWVEFFIETYFF). At 150–155 (PGLKEI) the chain is on the lumenal side. Residues 156–181 (HWLSNIGLCVCILGEVLRKTAILTAG) traverse the membrane as a helical segment. At 182-208 (SNFNHLVQCEKSSDHVLVTHGVYAWFR) the chain is on the cytoplasmic side. S-adenosyl-L-methionine-binding positions include Gln-189, 196-199 (HVLV), Tyr-204, and 209-212 (HPSY). Residues 209–226 (HPSYVGWFYWSIGTQIIL) traverse the membrane as a helical segment. The Lumenal segment spans residues 227-229 (INP). Residues 230–243 (LCIPAYTLASWMFF) form a helical membrane-spanning segment. At 244-281 (KERIYIEESMLLSFFGQQYCDYQQQVGTGIPFIEGYKI) the chain is on the cytoplasmic side. Arg-246 is a substrate binding site. Glu-250 is a binding site for S-adenosyl-L-methionine.

Belongs to the class VI-like SAM-binding methyltransferase superfamily. Isoprenylcysteine carboxyl methyltransferase family.

Its subcellular location is the endoplasmic reticulum membrane. It carries out the reaction [protein]-C-terminal S-[(2E,6E)-farnesyl]-L-cysteine + S-adenosyl-L-methionine = [protein]-C-terminal S-[(2E,6E)-farnesyl]-L-cysteine methyl ester + S-adenosyl-L-homocysteine. Catalyzes the post-translational methylation of isoprenylated C-terminal cysteine residues. This is Protein-S-isoprenylcysteine O-methyltransferase from Tribolium castaneum (Red flour beetle).